An 89-amino-acid polypeptide reads, in one-letter code: UPF0213 protein LSEI_1587 (89 aa).

The GIY-YIG domain maps to 4–79; the sequence is KTYYFYVLLC…KHQTRHRKEV (76 aa).

It belongs to the UPF0213 family.

This Lacticaseibacillus paracasei (strain ATCC 334 / BCRC 17002 / CCUG 31169 / CIP 107868 / KCTC 3260 / NRRL B-441) (Lactobacillus paracasei) protein is UPF0213 protein LSEI_1587.